The primary structure comprises 416 residues: Protein-glutamine gamma-glutamyltransferase (416 aa).

Positions 1–29 form a signal peptide, tat-type signal; it reads MHKRRRLLAFATVGAVICTAGFTPSVSQA. The propeptide occupies 30-85; the sequence is ASSGDGEEKGSYAETHGLTADDVESINALNERALTLGQPGKPPKELPPSASAPSRA. The interval 64-103 is disordered; that stretch reads TLGQPGKPPKELPPSASAPSRAPSDDRETPPAEPLDRMPE. Residues 76 to 85 show a composition bias toward low complexity; that stretch reads PPSASAPSRA. The span at 86 to 103 shows a compositional bias: basic and acidic residues; sequence PSDDRETPPAEPLDRMPE. C149 is a catalytic residue. The tract at residues 290–331 is disordered; that stretch reads GQDQRGSSDKRKYGDPEAFRPDQGTGLVDMSKDRSIPRSPAK. The span at 295-309 shows a compositional bias: basic and acidic residues; sequence GSSDKRKYGDPEAFR. Active-site residues include D340 and H359.

It belongs to the bacterial TGase family. Post-translationally, predicted to be exported by the Tat system. The position of the signal peptide cleavage has not been experimentally proven.

The catalysed reaction is L-glutaminyl-[protein] + L-lysyl-[protein] = [protein]-L-lysyl-N(6)-5-L-glutamyl-[protein] + NH4(+). Catalyzes the cross-linking of proteins and the conjugation of polyamines to proteins. This Streptomyces cinnamoneus (Streptoverticillium cinnamoneum) protein is Protein-glutamine gamma-glutamyltransferase.